We begin with the raw amino-acid sequence, 314 residues long: tRNA pseudouridine synthase B (314 aa).

Catalysis depends on D41, which acts as the Nucleophile.

This sequence belongs to the pseudouridine synthase TruB family. Type 1 subfamily.

The enzyme catalyses uridine(55) in tRNA = pseudouridine(55) in tRNA. Responsible for synthesis of pseudouridine from uracil-55 in the psi GC loop of transfer RNAs. This chain is tRNA pseudouridine synthase B, found in Prochlorococcus marinus (strain NATL1A).